The chain runs to 496 residues: Glycylpeptide N-tetradecanoyltransferase 1 (496 aa).

The disordered stretch occupies residues 1 to 82 (MADESETAVK…SAQDQPVKMN (82 aa)). Phosphoserine occurs at positions 31 and 47. The span at 55-66 (KKKKKKQKKKKE) shows a compositional bias: basic residues. Phosphoserine is present on Ser-83. Residues Gln-118, Phe-119, Trp-120, Phe-247, Leu-248, Cys-249, Val-250, Ser-256, Arg-258, Val-259, and Ala-260 each contribute to the tetradecanoyl-CoA site.

This sequence belongs to the NMT family. In terms of tissue distribution, heart, gut, kidney, liver and placenta.

The protein resides in the cytoplasm. It is found in the cytosol. It localises to the membrane. It carries out the reaction N-terminal glycyl-[protein] + tetradecanoyl-CoA = N-tetradecanoylglycyl-[protein] + CoA + H(+). It catalyses the reaction N-terminal glycyl-L-lysyl-[protein] + tetradecanoyl-CoA = N-terminal glycyl-(N(6)-tetradecanoyl)-L-lysyl-[protein] + CoA + H(+). Its function is as follows. Adds a myristoyl group to the N-terminal glycine residue of certain cellular and viral proteins. Also able to mediate N-terminal lysine myristoylation of proteins: catalyzes myristoylation of ARF6 on both 'Gly-2' and 'Lys-3'. Lysine myristoylation is required to maintain ARF6 on membranes during the GTPase cycle. The chain is Glycylpeptide N-tetradecanoyltransferase 1 from Homo sapiens (Human).